We begin with the raw amino-acid sequence, 221 residues long: Transcription factor otaR1 (221 aa).

The tract at residues 109 to 146 is disordered; it reads ASRSRPAFSTPASRPGLSSAKSPSLGATSPGSMDRSEE. Residues 127–139 are compositionally biased toward polar residues; it reads SAKSPSLGATSPG. The interval 152-192 is basic motif; sequence KKYHEKYKERNRLAAGRSRQKQADLINLLQAEQQEEERRRK. The bZIP domain occupies 152-215; sequence KKYHEKYKER…VDMKQELQHH (64 aa). A leucine-zipper region spans residues 198–212; the sequence is IANMQKELVDMKQEL.

It localises to the nucleus. Its function is as follows. Transcription factor; part of the gene cluster that mediates the biosynthesis of ochratoxin A (OTA), a mycotoxin demonstrated to have nephrotoxic, immunotoxic, genotoxic, neurotoxic, and teratogenic properties. Positively regulates the expression of the OTA biosynthetic genes and subsequent production of OTA. Probably binds to conserved 5'-ACGT-3' bZIP binding motifs found in multiple copies (3 to 4) in the promoters of the OTA biosynthetic genes. Acts not only as a pathway-specific regulator of the OTA cluster but also binds at other chromosomal positions outside the OTA cluster and can act as a broad regulator. Negatively regulates pathogenicity and plays a critical role in tolerance to reactive oxygen species (ROS). The chain is Transcription factor otaR1 from Aspergillus niger (strain ATCC MYA-4892 / CBS 513.88 / FGSC A1513).